A 168-amino-acid polypeptide reads, in one-letter code: Endoribonuclease YbeY (168 aa).

Zn(2+) is bound by residues H122, H126, and H132.

It belongs to the endoribonuclease YbeY family. The cofactor is Zn(2+).

It localises to the cytoplasm. Its function is as follows. Single strand-specific metallo-endoribonuclease involved in late-stage 70S ribosome quality control and in maturation of the 3' terminus of the 16S rRNA. The chain is Endoribonuclease YbeY from Brucella abortus (strain 2308).